The primary structure comprises 55 residues: HTH-type transcriptional regulator MerD (55 aa).

The 53-residue stretch at 3–55 folds into the HTH merR-type domain; sequence AYTVSRLALDAGVSVHIVRDYLLRGLLRPVACTPGGYGLFDDAALQRLCFVRA. The H-T-H motif DNA-binding region spans 6–25; sequence VSRLALDAGVSVHIVRDYLL.

In Pseudomonas fluorescens, this protein is HTH-type transcriptional regulator MerD (merD).